The chain runs to 261 residues: Glucosamine-6-phosphate deaminase (261 aa).

The Proton acceptor; for enolization step role is filled by Asp67. The active-site For ring-opening step is the Asn135. The active-site Proton acceptor; for ring-opening step is the His137. Residue Glu142 is the For ring-opening step of the active site.

It belongs to the glucosamine/galactosamine-6-phosphate isomerase family. NagB subfamily. In terms of assembly, homohexamer.

The enzyme catalyses alpha-D-glucosamine 6-phosphate + H2O = beta-D-fructose 6-phosphate + NH4(+). The protein operates within amino-sugar metabolism; N-acetylneuraminate degradation; D-fructose 6-phosphate from N-acetylneuraminate: step 5/5. In terms of biological role, catalyzes the reversible isomerization-deamination of glucosamine 6-phosphate (GlcN6P) to form fructose 6-phosphate (Fru6P) and ammonium ion. This Hahella chejuensis (strain KCTC 2396) protein is Glucosamine-6-phosphate deaminase.